The primary structure comprises 302 residues: Sulfate adenylyltransferase subunit 2 (302 aa).

The protein belongs to the PAPS reductase family. CysD subfamily. Heterodimer composed of CysD, the smaller subunit, and CysN.

It catalyses the reaction sulfate + ATP + H(+) = adenosine 5'-phosphosulfate + diphosphate. The protein operates within sulfur metabolism; hydrogen sulfide biosynthesis; sulfite from sulfate: step 1/3. Functionally, with CysN forms the ATP sulfurylase (ATPS) that catalyzes the adenylation of sulfate producing adenosine 5'-phosphosulfate (APS) and diphosphate, the first enzymatic step in sulfur assimilation pathway. APS synthesis involves the formation of a high-energy phosphoric-sulfuric acid anhydride bond driven by GTP hydrolysis by CysN coupled to ATP hydrolysis by CysD. The protein is Sulfate adenylyltransferase subunit 2 of Escherichia coli O157:H7 (strain EC4115 / EHEC).